The primary structure comprises 322 residues: HPr kinase/phosphorylase (322 aa).

Active-site residues include His-146 and Lys-167. Residue 161-168 (GDSGLGKS) coordinates ATP. Ser-168 provides a ligand contact to Mg(2+). The active-site Proton acceptor; for phosphorylation activity. Proton donor; for dephosphorylation activity is Asp-185. The tract at residues 209-218 (LEVRGLGLLD) is important for the catalytic mechanism of both phosphorylation and dephosphorylation. Position 210 (Glu-210) interacts with Mg(2+). Arg-250 is an active-site residue. Residues 271 to 276 (QVAAGR) are important for the catalytic mechanism of dephosphorylation.

The protein belongs to the HPrK/P family. Homohexamer. The cofactor is Mg(2+).

The enzyme catalyses [HPr protein]-L-serine + ATP = [HPr protein]-O-phospho-L-serine + ADP + H(+). The catalysed reaction is [HPr protein]-O-phospho-L-serine + phosphate + H(+) = [HPr protein]-L-serine + diphosphate. Functionally, catalyzes the ATP- as well as the pyrophosphate-dependent phosphorylation of a specific serine residue in HPr, a phosphocarrier protein of the phosphoenolpyruvate-dependent sugar phosphotransferase system (PTS). HprK/P also catalyzes the pyrophosphate-producing, inorganic phosphate-dependent dephosphorylation (phosphorolysis) of seryl-phosphorylated HPr (P-Ser-HPr). This Burkholderia cenocepacia (strain HI2424) protein is HPr kinase/phosphorylase.